A 646-amino-acid chain; its full sequence is Pentatricopeptide repeat-containing protein At5g48910 (646 aa).

A disordered region spans residues 1–24 (MNPTQTLFSPGGNSPASSPASHPS). Positions 9–24 (SPGGNSPASSPASHPS) are enriched in low complexity. 11 PPR repeats span residues 54–88 (DTLA…MPQR), 89–126 (NCFS…FVEP), 127–161 (NRFT…GFGG), 162–197 (DEFV…DMVV), 207–237 (EIVL…MRQR), 238–272 (SVVS…DIRP), 273–307 (NYVT…GIRI), 308–338 (DDVL…LPRE), 339–373 (NVIT…GVRP), 374–409 (SDVA…GLEP), and 410–440 (RIEH…MPIK). The interval 445–520 (IWKALLGACR…DPGCSLIDID (76 aa)) is type E motif. Residues 521-551 (GVLHEFVVEDDSHPKAKEINSMLVEISDKLR) form a type E(+) motif region. Positions 552 to 646 (LAGYRPITTQ…DGSCSCMDYW (95 aa)) are type DYW motif.

Belongs to the PPR family. PCMP-H subfamily.

The chain is Pentatricopeptide repeat-containing protein At5g48910 (PCMP-H38) from Arabidopsis thaliana (Mouse-ear cress).